We begin with the raw amino-acid sequence, 603 residues long: MAVQDRSVLVLYGSETGNAQDMAEELGRICQRLHFKSRVEELDVVDLNALLQPKFVIFVISTTGQGDMPHNSLLFWKRLLRKKLPPGCLASVNYTTFGLGDSTYLKFNWAARKLNRRLDQLGAATFIDPYEADEQFPDGLDGSFVRWTGRLYNHFLEHHPAPSGLEPIPDDVILPPKWSLETTIQNSTETNGHVPPSLENIPSSTLLPIPDGWTATLVGNGRLTPEKHWQDVRLISFDVPRRDGVKLACVPGDCLTIYPKNFPQDVQRLITLMEWEDIADKPLDLSQCESLPTNLFTDSKSTLRELLLNNIDFTAIPRRSFLKNMSYFSTNPDHKERLLEFTMAEYLDEYFDYATRSRRSILEVLEEFSSVKLPAERLFDIFPLIRGRDFSIANGGVHQSHPTDENKTRIELLVALVKYRTVLRKPREGLCSRYLDNIPMNSTLTVTRKPVLSPIHGAQNAQRPLVAIATGTGLAPIRALLHERLTQPSPGPMYLFFGNRNREADYFFQQEFDALVTEGQLNVFLAFSRDQRNKIYVQDRLLEEAKRIEEVIFDNGIFCVCGGSTKMADAAKKAVFEPFSEDVKDVEERKKMLASLTWWQEIW.

A Flavodoxin-like domain is found at 8–152 (VLVLYGSETG…SFVRWTGRLY (145 aa)). Residues 14 to 19 (SETGNA), 61 to 64 (STTG), 99 to 108 (LGDSTYLKFN), and E134 each bind FMN. The 248-residue stretch at 210–457 (PDGWTATLVG…RKPVLSPIHG (248 aa)) folds into the FAD-binding FR-type domain. FAD-binding positions include R358, 388–391 (RDFS), and 429–432 (GLCS). NADP(+) contacts are provided by residues T472, 528–529 (SR), and 534–538 (KIYVQ). W603 provides a ligand contact to FAD.

This sequence belongs to the NADPH-dependent diflavin oxidoreductase NDOR1 family. In the N-terminal section; belongs to the flavodoxin family. It in the C-terminal section; belongs to the flavoprotein pyridine nucleotide cytochrome reductase family. Interacts with DRE2; as part of the cytosolic iron-sulfur (Fe-S) protein assembly (CIA) machinery. It depends on FAD as a cofactor. The cofactor is FMN.

It is found in the cytoplasm. The protein localises to the mitochondrion. The catalysed reaction is 2 oxidized [2Fe-2S]-[protein] + NADPH = 2 reduced [2Fe-2S]-[protein] + NADP(+) + H(+). Functionally, NADPH-dependent reductase which is a central component of the cytosolic iron-sulfur (Fe-S) protein assembly (CIA) machinery. Transfers electrons from NADPH via its FAD and FMN prosthetic groups to the [2Fe-2S] cluster of DRE2, another key component of the CIA machinery. In turn, this reduced cluster provides electrons for assembly of cytosolic iron-sulfur cluster proteins. Positively controls H(2)O(2)-induced cell death. The protein is NADPH-dependent diflavin oxidoreductase 1 of Gibberella zeae (strain ATCC MYA-4620 / CBS 123657 / FGSC 9075 / NRRL 31084 / PH-1) (Wheat head blight fungus).